The following is a 403-amino-acid chain: Imidazolonepropionase (403 aa).

Positions 69 and 71 each coordinate Fe(3+). The Zn(2+) site is built by H69 and H71. 4-imidazolone-5-propanoate is bound by residues R78, Y141, and H174. Residue Y141 coordinates N-formimidoyl-L-glutamate. H239 contacts Fe(3+). H239 serves as a coordination point for Zn(2+). A 4-imidazolone-5-propanoate-binding site is contributed by Q242. D314 contributes to the Fe(3+) binding site. D314 lines the Zn(2+) pocket. N-formimidoyl-L-glutamate is bound by residues N316 and G318. S319 is a 4-imidazolone-5-propanoate binding site.

The protein belongs to the metallo-dependent hydrolases superfamily. HutI family. The cofactor is Zn(2+). Fe(3+) is required as a cofactor.

It is found in the cytoplasm. The enzyme catalyses 4-imidazolone-5-propanoate + H2O = N-formimidoyl-L-glutamate. The protein operates within amino-acid degradation; L-histidine degradation into L-glutamate; N-formimidoyl-L-glutamate from L-histidine: step 3/3. In terms of biological role, catalyzes the hydrolytic cleavage of the carbon-nitrogen bond in imidazolone-5-propanoate to yield N-formimidoyl-L-glutamate. It is the third step in the universal histidine degradation pathway. This is Imidazolonepropionase from Legionella pneumophila (strain Lens).